Consider the following 78-residue polypeptide: Probable [Fe-S]-dependent transcriptional repressor (78 aa).

Iron-sulfur cluster is bound by residues C56, C61, C64, and C70.

This sequence belongs to the FeoC family.

May function as a transcriptional regulator that controls feoABC expression. The sequence is that of Probable [Fe-S]-dependent transcriptional repressor from Escherichia coli O127:H6 (strain E2348/69 / EPEC).